The following is a 645-amino-acid chain: Chaperone protein DnaK (645 aa).

A Phosphothreonine; by autocatalysis modification is found at Thr200. The interval 603 to 645 (AYSAQKDSGTSTDSTASDTSGNPEERVVDSEYQEIKKDDEDKK) is disordered. The segment covering 609-623 (DSGTSTDSTASDTSG) has biased composition (low complexity). Positions 625-645 (PEERVVDSEYQEIKKDDEDKK) are enriched in basic and acidic residues.

This sequence belongs to the heat shock protein 70 family.

Its function is as follows. Acts as a chaperone. In Anaplasma marginale (strain St. Maries), this protein is Chaperone protein DnaK.